A 368-amino-acid chain; its full sequence is Abasic site processing protein YMR114C (368 aa).

Residue Cys2 is the Nucleophile of the active site. Cys2 is subject to Thiazolidine linkage to a ring-opened DNA abasic site. The disordered stretch occupies residues 25–48; it reads VNTPKDASSNSQHPHDEEDTKDQP. The span at 37 to 46 shows a compositional bias: basic and acidic residues; it reads HPHDEEDTKD. Glu132 is a catalytic residue. The disordered stretch occupies residues 270–368; the sequence is LENDNEQGID…DSRGKKKIKK (99 aa). Composition is skewed to basic and acidic residues over residues 281-296, 304-313, and 326-349; these read RGVK…DVFN, NSYDGLKKNE, and IGDR…EKRN. The residue at position 338 (Ser338) is a Phosphoserine.

This sequence belongs to the SOS response-associated peptidase family.

Its subcellular location is the chromosome. With respect to regulation, formation and reversal of DNA-protein cross-link depends on DNA context. Catalyzes formation of the thiazolidine linkage in presence of abasic sites in single-stranded DNA. Mediates the reversal of the thiazolidine cross-link in presence of double stranded DNA. In terms of biological role, sensor of abasic sites in single-stranded DNA (ssDNA) required to preserve genome integrity by promoting error-free repair of abasic sites. Recognizes and binds abasic sites in ssDNA at replication forks and chemically modifies the lesion by forming a covalent cross-link with DNA: forms a stable thiazolidine linkage between a ring-opened abasic site and the alpha-amino and sulfhydryl substituents of its N-terminal catalytic cysteine residue. The DNA-protein cross-link is then reversed: able to catalyze the reversal of the thiazolidine cross-link and cycle between a cross-link and a non-cross-linked state depending on DNA context: mediates self-reversal of the thiazolidine cross-link in double stranded DNA. Acts as a protease: mediates autocatalytic processing of its N-terminal methionine in order to expose the catalytic cysteine. This chain is Abasic site processing protein YMR114C, found in Saccharomyces cerevisiae (strain ATCC 204508 / S288c) (Baker's yeast).